A 118-amino-acid polypeptide reads, in one-letter code: MAVSAALVLLGLLSLSGLDAIQRIPEVQVYSRHPPEDGKPNYLNCYVYGFHPPQIEIDLLKNGEKIKSEQSDLSFSKDWSFYLLSHAEFTPNSKDQYSCRVNHVTLTQPKIVKWDRDL.

Residues Met-1 to Ala-20 form the signal peptide. Residues Pro-25–Val-112 enclose the Ig-like C1-type domain. Residues Cys-45 and Cys-99 are joined by a disulfide bond.

It belongs to the beta-2-microglobulin family. As to quaternary structure, heterodimer of an alpha chain and a beta chain. Beta-2-microglobulin is the beta-chain of major histocompatibility complex class I molecules.

The protein localises to the secreted. In terms of biological role, component of the class I major histocompatibility complex (MHC). Involved in the presentation of peptide antigens to the immune system. This Ovis aries (Sheep) protein is Beta-2-microglobulin (B2M).